A 663-amino-acid polypeptide reads, in one-letter code: Transketolase 2 (663 aa).

A substrate-binding site is contributed by H25. Thiamine diphosphate contacts are provided by residues H65 and G113–L115. D154 is a binding site for Mg(2+). Residues G155 and N184 each contribute to the thiamine diphosphate site. N184 and I186 together coordinate Mg(2+). Positions 259, 356, and 383 each coordinate substrate. A thiamine diphosphate-binding site is contributed by H259. E410 (proton donor) is an active-site residue. F436 lines the thiamine diphosphate pocket. Substrate contacts are provided by H460, D468, and R519.

It belongs to the transketolase family. In terms of assembly, homodimer. Mg(2+) serves as cofactor. The cofactor is Ca(2+). It depends on Mn(2+) as a cofactor. Co(2+) is required as a cofactor. Requires thiamine diphosphate as cofactor.

The enzyme catalyses D-sedoheptulose 7-phosphate + D-glyceraldehyde 3-phosphate = aldehydo-D-ribose 5-phosphate + D-xylulose 5-phosphate. Functionally, catalyzes the transfer of a two-carbon ketol group from a ketose donor to an aldose acceptor, via a covalent intermediate with the cofactor thiamine pyrophosphate. The polypeptide is Transketolase 2 (tkt2) (Aliivibrio fischeri (strain ATCC 700601 / ES114) (Vibrio fischeri)).